The primary structure comprises 251 residues: Adapter protein MecA (251 aa).

Belongs to the MecA family. As to quaternary structure, homodimer.

Enables the recognition and targeting of unfolded and aggregated proteins to the ClpC protease or to other proteins involved in proteolysis. The sequence is that of Adapter protein MecA from Streptococcus agalactiae serotype III (strain NEM316).